The following is a 221-amino-acid chain: Oxaloacetate tautomerase FAHD1, mitochondrial (221 aa).

Residues 1-24 constitute a mitochondrion transit peptide; the sequence is MAASRPLSRFWEWGKNIVCVGRNY. Arginine 22 lines the oxalate pocket. Serine 37 is subject to Phosphoserine. Residues glutamate 68, glutamate 70, and aspartate 99 each contribute to the Mg(2+) site. Lysine 110 carries the post-translational modification N6-acetyllysine. Lysine 112 carries the post-translational modification N6-succinyllysine. Lysine 120 and threonine 189 together coordinate oxalate.

This sequence belongs to the FAH family. As to quaternary structure, homodimer. Mg(2+) serves as cofactor. Requires Mn(2+) as cofactor. As to expression, ubiquitous (at protein level).

The protein resides in the mitochondrion. The protein localises to the cytoplasm. It is found in the cytosol. It carries out the reaction oxaloacetate = enol-oxaloacetate. The catalysed reaction is oxaloacetate + H(+) = pyruvate + CO2. The enzyme catalyses a 3-acylpyruvate + H2O = a carboxylate + pyruvate + H(+). It catalyses the reaction acetylpyruvate + H2O = acetate + pyruvate + H(+). It carries out the reaction 3-fumarylpyruvate + H2O = fumarate + pyruvate + H(+). With respect to regulation, oxaloacetate decarboxylation is competitively inhibited by oxalate. Its function is as follows. Tautomerase that converts enol-oxaloacetate, a strong inhibitor of succinate dehydrogenase, to the physiological keto form of oxaloacetate. It is thereby required to maximize aerobic respiration efficiency by preventing succinate dehydrogenase inhibition. Also acts as a weak oxaloacetate decarboxylase (ODx), catalyzing the decarboxylation of oxaloacetate (OAA) to pyruvate and CO(2), and as such is likely a regulatory enzyme in the TCA cycle. Also displays acylpyruvase activity, being able to hydrolyze acetylpyruvate and fumarylpyruvate in vitro. Exhibits only a weak hydrolase activity on methylacetopyruvate and acetylacetone, and no activity toward acetoacetyl-CoA. This is Oxaloacetate tautomerase FAHD1, mitochondrial from Homo sapiens (Human).